A 215-amino-acid polypeptide reads, in one-letter code: Glutathione S-transferase D2 (215 aa).

The region spanning 1 to 80 (MDFYYMPGGG…YLVEKYGKDD (80 aa)) is the GST N-terminal domain. Residues 50–52 (HTI) and 64–66 (ESR) contribute to the glutathione site. In terms of domain architecture, GST C-terminal spans 86-212 (DPKKRAVINQ…MKALFDARKL (127 aa)).

The protein belongs to the GST superfamily. Delta family. As to quaternary structure, homodimer.

The enzyme catalyses RX + glutathione = an S-substituted glutathione + a halide anion + H(+). Its function is as follows. Conjugation of reduced glutathione to a wide number of exogenous and endogenous hydrophobic electrophiles. May be involved in detoxification. The chain is Glutathione S-transferase D2 from Drosophila melanogaster (Fruit fly).